Reading from the N-terminus, the 338-residue chain is Lipoate-protein ligase A (338 aa).

In terms of domain architecture, BPL/LPL catalytic spans 29–216 (PATQRVLFLW…AFFAHYGERV (188 aa)). ATP-binding positions include R71, 76–79 (GAVF), and K134. (R)-lipoate is bound at residue K134.

Belongs to the LplA family. As to quaternary structure, monomer.

The protein localises to the cytoplasm. It carries out the reaction L-lysyl-[lipoyl-carrier protein] + (R)-lipoate + ATP = N(6)-[(R)-lipoyl]-L-lysyl-[lipoyl-carrier protein] + AMP + diphosphate + H(+). The protein operates within protein modification; protein lipoylation via exogenous pathway; protein N(6)-(lipoyl)lysine from lipoate: step 1/2. Its pathway is protein modification; protein lipoylation via exogenous pathway; protein N(6)-(lipoyl)lysine from lipoate: step 2/2. Functionally, catalyzes both the ATP-dependent activation of exogenously supplied lipoate to lipoyl-AMP and the transfer of the activated lipoyl onto the lipoyl domains of lipoate-dependent enzymes. The sequence is that of Lipoate-protein ligase A from Salmonella choleraesuis (strain SC-B67).